The chain runs to 451 residues: F-box/LRR-repeat protein 13 (451 aa).

One can recognise an F-box domain in the interval 17-70 (VDWISKLPDCLLCEVLLNLPTKDVVKTSVLSRRWRNLWKHVPGLDLDNTDFQEF). 4 LRR repeats span residues 128-155 (DDSY…KLCG), 177-202 (TKFA…TIER), 224-251 (VADS…RLSD), and 335-363 (CVEF…VVKS). Positions 370 to 421 (GENIILPGPRRFLSSLEYVKIERPLKGEAMEMKLVSYLLENSTILKKLTLCL) constitute an FBD domain.

In Arabidopsis thaliana (Mouse-ear cress), this protein is F-box/LRR-repeat protein 13 (FBL13).